We begin with the raw amino-acid sequence, 427 residues long: 3-phosphoshikimate 1-carboxyvinyltransferase (427 aa).

Residues lysine 20, serine 21, and arginine 25 each contribute to the 3-phosphoshikimate site. Residue lysine 20 participates in phosphoenolpyruvate binding. Residues glycine 92 and arginine 120 each coordinate phosphoenolpyruvate. 3-phosphoshikimate is bound by residues serine 166, glutamine 168, aspartate 312, and lysine 339. Glutamine 168 provides a ligand contact to phosphoenolpyruvate. The Proton acceptor role is filled by aspartate 312. Phosphoenolpyruvate is bound by residues arginine 343 and arginine 385.

This sequence belongs to the EPSP synthase family. In terms of assembly, monomer.

Its subcellular location is the cytoplasm. It catalyses the reaction 3-phosphoshikimate + phosphoenolpyruvate = 5-O-(1-carboxyvinyl)-3-phosphoshikimate + phosphate. Its pathway is metabolic intermediate biosynthesis; chorismate biosynthesis; chorismate from D-erythrose 4-phosphate and phosphoenolpyruvate: step 6/7. Functionally, catalyzes the transfer of the enolpyruvyl moiety of phosphoenolpyruvate (PEP) to the 5-hydroxyl of shikimate-3-phosphate (S3P) to produce enolpyruvyl shikimate-3-phosphate and inorganic phosphate. The chain is 3-phosphoshikimate 1-carboxyvinyltransferase from Streptococcus uberis (strain ATCC BAA-854 / 0140J).